The chain runs to 607 residues: MSSGLRAADFPRWKRHISEQLRRRDRLQRQAFEEIILQYNKLLEKSDLHSVLAQKLQAEKHDVPNRHEISPGHDGTWNDNQLQEMAQLRIKHQEELTELHKKRGELAQLVIDLNNQMQRKDREMQMNEAKIAECLQTISDLETECLDLRTKLCDLERANQTLKDEYDALQITFTALEGKLRKTTEENQELVTRWMAEKAQEANRLNAENEKDSRRRQARLQKELAEAAKEPLPVEQDDDIEVIVDETSDHTEETSPVRAISRAATKRLSQPAGGLLDSITNIFGRRSVSSFPVPQDNVDTHPGSGKEVRVPATALCVFDAHDGEVNAVQFSPGSRLLATGGMDRRVKLWEVFGEKCEFKGSLSGSNAGITSIEFDSAGSYLLAASNDFASRIWTVDDYRLRHTLTGHSGKVLSAKFLLDNARIVSGSHDRTLKLWDLRSKVCIKTVFAGSSCNDIVCTEQCVMSGHFDKKIRFWDIRSESIVREMELLGKITALDLNPERTELLSCSRDDLLKVIDLRTNAIKQTFSAPGFKCGSDWTRVVFSPDGSYVAAGSAEGSLYIWSVLTGKVEKVLSKQHSSSINAVAWSPSGSHVVSVDKGCKAVLWAQY.

The interaction with ATG5 stretch occupies residues W13 to L43. The stretch at N78–E230 forms a coiled coil. S139 carries the phosphoserine; by CK2 modification. Residues A207–E230 are WIPI2-binding. The RB1CC1-binding stretch occupies residues E230 to V242. S269 and S287 each carry phosphoserine. The Caspase cleavage signature appears at D296–D299. 7 WD repeats span residues A320–K359, G364–T403, G406–T445, F447–E484, E486–T525, K532–S573, and Q575–Y607.

The protein belongs to the WD repeat ATG16 family. Homodimer. Homooligomer. Heterooligomer with ATG16L2. Interacts with WIPI1. Interacts with WIPI2. Interacts with RB1CC1; the interaction is required for ULK1 complex-dependent autophagy. Interacts with ATG5. Part of the minor complex composed of 4 sets of ATG12-ATG5 and ATG16L1 (400 kDa); this complex interacts with ATG3 leading to disruption of ATG7 interaction and promotion of ATG8-like proteins lipidation. Part of the major complex composed of 8 sets of ATG12-ATG5 and ATG16L1 (800 kDa). Interacts with RAB33B (GTP- and GDP-bound forms); the complex consists of a tetramer where two RAB33B molecules bind independently one molecule of the ATG16L1 homodimer; the interaction promotes ATG12-ATG5-ATG16L1 complex recruitment to phagophores. Interacts (via WD repeats) with TMEM59; the interaction mediates unconventional autophagic activity of TMEM59. Interacts with TLR2. Interacts (via WD repeats) with MEFV. Interacts with PPP1CA; the interaction dephosphorylates ATG16L1 causing dissociation of ATG12-ATG5-ATG16L1 complex. Interacts (via N-terminal) with CLTC. Interacts with NOD1. Interacts with NOD2. Interacts with TUFM. Interacts with TRIM16. Interacts (via WD repeats) with SPATA33. Interacts with IRGM. In terms of processing, proteolytic cleavage by activated CASP3 leads to degradation and may regulate autophagy upon cellular stress and apoptotic stimuli. Phosphorylation at Ser-139 promotes association with the ATG12-ATG5 conjugate to form the ATG12-ATG5-ATG16L1 complex.

The protein resides in the cytoplasm. It localises to the preautophagosomal structure membrane. Its subcellular location is the endosome membrane. It is found in the lysosome membrane. Plays an essential role in both canonical and non-canonical autophagy: interacts with ATG12-ATG5 to mediate the lipidation to ATG8 family proteins (MAP1LC3A, MAP1LC3B, MAP1LC3C, GABARAPL1, GABARAPL2 and GABARAP). Acts as a molecular hub, coordinating autophagy pathways via distinct domains that support either canonical or non-canonical signaling. During canonical autophagy, interacts with ATG12-ATG5 to mediate the conjugation of phosphatidylethanolamine (PE) to ATG8 proteins, to produce a membrane-bound activated form of ATG8. Thereby, controls the elongation of the nascent autophagosomal membrane. As part of the ATG8 conjugation system with ATG5 and ATG12, required for recruitment of LRRK2 to stressed lysosomes and induction of LRRK2 kinase activity in response to lysosomal stress. Also involved in non-canonical autophagy, a parallel pathway involving conjugation of ATG8 proteins to single membranes at endolysosomal compartments, probably by catalyzing conjugation of phosphatidylserine (PS) to ATG8. Non-canonical autophagy plays a key role in epithelial cells to limit lethal infection by influenza A (IAV) virus. Regulates mitochondrial antiviral signaling (MAVS)-dependent type I interferon (IFN-I) production. Negatively regulates NOD1- and NOD2-driven inflammatory cytokine response. Instead, promotes an autophagy-dependent antibacterial pathway together with NOD1 or NOD2. Plays a role in regulating morphology and function of Paneth cell. The sequence is that of Autophagy-related protein 16-1 from Homo sapiens (Human).